A 518-amino-acid chain; its full sequence is Golgi-associated olfactory signaling regulator (518 aa).

An N-terminal signal peptide occupies residues 1 to 19 (MKSFSRILFLVFLLAGLRS). Residues 20 to 409 (KAAPSAPLPL…GRPRGAAGGA (390 aa)) are Extracellular-facing. The tract at residues 38–377 (HPSETSPLKG…ATLRAPQRHS (340 aa)) is disordered. The segment covering 92 to 106 (DLRETPHPESPETPK) has biased composition (basic and acidic residues). The N-linked (GlcNAc...) asparagine glycan is linked to N124. The span at 138–153 (TPGPTEMPHPGSPETP) shows a compositional bias: pro residues. A glycan (N-linked (GlcNAc...) asparagine) is linked at N156. 2 stretches are compositionally biased toward polar residues: residues 168–180 (TPNTDLMQTTPQE) and 187–207 (LNATEVSQAELPETSNTNPTK). N-linked (GlcNAc...) asparagine glycosylation is found at N188 and N220. 2 stretches are compositionally biased toward basic and acidic residues: residues 209–220 (PDPKSPEKHDLN) and 236–247 (DPSKTPHPESHV). Composition is skewed to polar residues over residues 248-270 (THNPSPTEISQTEFPTTYYQNAT) and 276-285 (SDPQISTSLY). Residue N268 is glycosylated (N-linked (GlcNAc...) asparagine). Residues 410 to 430 (LCLFFAGTALLIGIFVLLWCL) traverse the membrane as a helical segment. The Cytoplasmic segment spans residues 431–518 (YRRAARQRPF…SPATLPNNFV (88 aa)). The tract at residues 477 to 518 (HIATKQPPPTPPLPPKLPPPPRGGRPQRLEALSPATLPNNFV) is disordered. The segment covering 482-499 (QPPPTPPLPPKLPPPPRG) has biased composition (pro residues).

It is found in the golgi apparatus membrane. Functionally, required for proper function of the olfactory system. May be involved in establishing the acuity of olfactory sensory signaling. In Homo sapiens (Human), this protein is Golgi-associated olfactory signaling regulator (GFY).